The following is a 521-amino-acid chain: MRIWILIFFSFIKLVSSLQYTGNGVLALDFVAKTFPNQENQLEKRDYTYSPSGITSFPLDLQSYTYYTTTLSIGRPSISYTVAIDLDMPYTWLTYYNVMAFNPAYLGIVNSGTQWSTDELRYFLCKKESDSCYFGNASSSFHFVTSPSTFFIRYDDNITVAGINVQDSLSYSHYQALPDFQFGITLKEYVPSSMLPYKGVLGLAASTEINSIDYSDSISSFSPPTFLEQLVKEDILAYPAFSMYLDNQGNGSLLLGAVDTSKYQGQFVALKQTKLTHYAVSIYSVQFLNSTFFSNYSIITDAYFQTRETYIYLPAELAYSVMDNAGAYLSEGYFALNCDEIDLEAALIFQFGCNSTIKVPISLLVIGQVSNICLLGIRPSTDSEIVLGLLFFRNAYTFYHQSQKMIAIGQAFYNATSNLSAIVDQHIPGALTCSQYPTSVASTQLVQTSHFTSTSLSAVNISESVVYSYTSSSSMPSSAIPSFNISLISQNAVANAGNSFSPLSAMVIMMMSAVFLGLGII.

A signal peptide spans 1–17 (MRIWILIFFSFIKLVSS). Over 18 to 500 (LQYTGNGVLA…NAVANAGNSF (483 aa)) the chain is Extracellular. The region spanning 67–409 (YTTTLSIGRP…HQSQKMIAIG (343 aa)) is the Peptidase A1 domain. Aspartate 85 is an active-site residue. Asparagine 136, asparagine 157, asparagine 250, asparagine 289, asparagine 295, asparagine 354, asparagine 414, asparagine 418, asparagine 460, and asparagine 484 each carry an N-linked (GlcNAc...) asparagine glycan. The helical transmembrane segment at 501–521 (SPLSAMVIMMMSAVFLGLGII) threads the bilayer.

It belongs to the peptidase A1 family.

Its subcellular location is the endoplasmic reticulum membrane. It is found in the secreted. The protein localises to the cell wall. Cleaves at paired basic residues. The protein is Aspartic proteinase yapsin-1 (yps1) of Schizosaccharomyces pombe (strain 972 / ATCC 24843) (Fission yeast).